We begin with the raw amino-acid sequence, 230 residues long: Uracil-DNA glycosylase (230 aa).

Residue Asp70 is the Proton acceptor of the active site.

It belongs to the uracil-DNA glycosylase (UDG) superfamily. UNG family.

It is found in the cytoplasm. The catalysed reaction is Hydrolyzes single-stranded DNA or mismatched double-stranded DNA and polynucleotides, releasing free uracil.. Functionally, excises uracil residues from the DNA which can arise as a result of misincorporation of dUMP residues by DNA polymerase or due to deamination of cytosine. In Pseudomonas putida (strain ATCC 700007 / DSM 6899 / JCM 31910 / BCRC 17059 / LMG 24140 / F1), this protein is Uracil-DNA glycosylase.